A 132-amino-acid polypeptide reads, in one-letter code: MGSTSSTPKSTICTFSTTAPVTSSTPYFFNPKKEHIILAFFAGVLLTLLIVALIFLIVKSCRKCHSSAQTQDPPSEPPTKLSSLSKESLTYASMTFKPPEENSNDLTRNHSSGLEPTIYSQIKVTDSDLPLP.

Residues 36-56 (IILAFFAGVLLTLLIVALIFL) traverse the membrane as a helical segment. The segment at 95-132 (TFKPPEENSNDLTRNHSSGLEPTIYSQIKVTDSDLPLP) is disordered. Positions 104–124 (NDLTRNHSSGLEPTIYSQIKV) are enriched in polar residues. Ser-111 carries the phosphoserine modification.

Its subcellular location is the membrane. The protein is Transmembrane protein C1orf162 homolog of Mus musculus (Mouse).